A 249-amino-acid chain; its full sequence is Small ribosomal subunit protein eS6 (249 aa).

Over residues 223–238 the composition is skewed to basic residues; sequence LRQRDHSKKHTRKVHA. Residues 223-249 are disordered; the sequence is LRQRDHSKKHTRKVHAQRAEVAAFQKK.

Belongs to the eukaryotic ribosomal protein eS6 family. In terms of processing, ribosomal protein S6 is the major substrate of protein kinases in eukaryote ribosomes.

Its function is as follows. Component of the 40S small ribosomal subunit. Plays an important role in controlling cell growth and proliferation through the selective translation of particular classes of mRNA. The protein is Small ribosomal subunit protein eS6 (RPS6) of Leishmania major.